The chain runs to 351 residues: Histidinol-phosphate aminotransferase (351 aa).

The residue at position 209 (lysine 209) is an N6-(pyridoxal phosphate)lysine.

Belongs to the class-II pyridoxal-phosphate-dependent aminotransferase family. Histidinol-phosphate aminotransferase subfamily. In terms of assembly, homodimer. Pyridoxal 5'-phosphate is required as a cofactor.

It carries out the reaction L-histidinol phosphate + 2-oxoglutarate = 3-(imidazol-4-yl)-2-oxopropyl phosphate + L-glutamate. Its pathway is amino-acid biosynthesis; L-histidine biosynthesis; L-histidine from 5-phospho-alpha-D-ribose 1-diphosphate: step 7/9. The sequence is that of Histidinol-phosphate aminotransferase from Chromohalobacter salexigens (strain ATCC BAA-138 / DSM 3043 / CIP 106854 / NCIMB 13768 / 1H11).